Consider the following 472-residue polypeptide: MANRLNNDFQFIDVGRQDPEKKPARTRAKQFAEIYEPYKPQDAAAQAHRCLHCGNPYCEWKCPVHNYIPNWLQLVSEGNILEAAELSHRTNSLPEVCGRVCPQDRLCEGDCTLNDGFGAVTIGSVEKYITDTAFAMGWRPDMSKVTWTDKKVAIIGAGPAGLGCADILVRNGVKPVVFDKYPEIGGLLTFGIPEFKLEKTVMERRRAVFEEMGVEFCLGVEIGRDMPFEQLLEEYDAVFLGMGTYKYMEGGFPGEDLPGVHKALDYLVANVNHCLGFETDPADYVSLEGQRVVVLGGGDTAMDCNRTAIRQGAASVTCAYRRDEDNMPGSRKEVANAREEGVDFLFNRQPVAVIGEDRVEGIKVVRTRLGEPDENGRQRPEVVPGSEEVVPADAVVIAFGFQPSPAPWFETVGIELDEKGRVKAPEEGAYAFQTTNEKIFAGGDMVRGSDLVVTAVFEGRQAGEGILDYLDV.

The region spanning 41–72 (QDAAAQAHRCLHCGNPYCEWKCPVHNYIPNWL) is the 4Fe-4S ferredoxin-type domain. The [4Fe-4S] cluster site is built by cysteine 50, cysteine 53, cysteine 58, and cysteine 62.

[4Fe-4S] cluster is required as a cofactor.

The enzyme catalyses 2 L-glutamate + NADP(+) = L-glutamine + 2-oxoglutarate + NADPH + H(+). Its pathway is amino-acid biosynthesis; L-glutamate biosynthesis via GLT pathway; L-glutamate from 2-oxoglutarate and L-glutamine (NADP(+) route): step 1/1. It functions in the pathway energy metabolism; nitrogen metabolism. Functionally, catalyzes the conversion of L-glutamine and 2-oxoglutarate into two molecules of L-glutamate. This is Glutamate synthase [NADPH] small chain from Halomonas elongata (strain ATCC 33173 / DSM 2581 / NBRC 15536 / NCIMB 2198 / 1H9).